The chain runs to 346 residues: uncharacterized protein (346 aa).

This is an uncharacterized protein from Mycoplasma genitalium (strain ATCC 33530 / DSM 19775 / NCTC 10195 / G37) (Mycoplasmoides genitalium).